A 121-amino-acid chain; its full sequence is Large ribosomal subunit protein bL12 (121 aa).

Belongs to the bacterial ribosomal protein bL12 family. In terms of assembly, homodimer. Part of the ribosomal stalk of the 50S ribosomal subunit. Forms a multimeric L10(L12)X complex, where L10 forms an elongated spine to which 2 to 4 L12 dimers bind in a sequential fashion. Binds GTP-bound translation factors.

In terms of biological role, forms part of the ribosomal stalk which helps the ribosome interact with GTP-bound translation factors. Is thus essential for accurate translation. The protein is Large ribosomal subunit protein bL12 of Ureaplasma urealyticum serovar 10 (strain ATCC 33699 / Western).